A 1313-amino-acid polypeptide reads, in one-letter code: Histone-lysine N-methyltransferase, H3 lysine-4 specific (1313 aa).

6 disordered regions span residues 1 to 205, 400 to 458, 555 to 607, 667 to 792, 842 to 908, and 932 to 982; these read MSRS…DPSR, KKSR…KPRH, GKSS…AKNL, IVFD…AGED, ELPS…SKKQ, and AGIE…DPEL. Positions 7 to 18 are enriched in low complexity; the sequence is ASFAQFFPAAPR. Residues 19–31 are compositionally biased toward basic and acidic residues; that stretch reads AARDRATERERAR. Polar residues predominate over residues 70–80; sequence HITSLNHSSSA. Residues 105 to 121 show a composition bias toward low complexity; the sequence is SASSHTSTSSSIFSSST. Composition is skewed to polar residues over residues 130–158 and 174–186; these read SVRN…STSL and NGLT…SATD. Residues 194-204 are compositionally biased toward basic and acidic residues; sequence GTERVPPRDPS. Positions 559–607 are enriched in basic and acidic residues; that stretch reads RSSEDHRRHSYGSEKRPPPEHRQRDDQDRRRRDEEADIEEEKKQRAKNL. Residues 702-716 show a composition bias toward basic residues; that stretch reads RVRKLKSRGVNARKH. Residues 758–784 are compositionally biased toward basic and acidic residues; sequence MIRDTEEPESRPRSRVSSEEDRNKEET. Residues 843-855 show a composition bias toward polar residues; it reads LPSQEQAVESVTP. Residues 868–884 show a composition bias toward basic and acidic residues; that stretch reads ADVKAEPAEDKETEDSR. A compositionally biased stretch (basic residues) spans 895-907; it reads PKKKAKAKKKSKK. Residues 960-978 show a composition bias toward basic and acidic residues; the sequence is LETKGEALEAPETESKPDL. The RxxxRR motif motif lies at 1137-1142; that stretch reads RVNNRR. Residues 1171 to 1288 enclose the SET domain; the sequence is KPVKFARSAI…QNEELTYDYK (118 aa). Tyr-1287 contributes to the S-adenosyl-L-methionine binding site. A Post-SET domain is found at 1297–1313; that stretch reads DRIPCLCGTAACKGFLN.

Belongs to the class V-like SAM-binding methyltransferase superfamily. Component of the Set1C/COMPASS complex.

The protein localises to the nucleus. It localises to the chromosome. The enzyme catalyses L-lysyl(4)-[histone H3] + 3 S-adenosyl-L-methionine = N(6),N(6),N(6)-trimethyl-L-lysyl(4)-[histone H3] + 3 S-adenosyl-L-homocysteine + 3 H(+). It catalyses the reaction N(6)-methyl-L-lysyl(4)-[histone H3] + S-adenosyl-L-methionine = N(6),N(6)-dimethyl-L-lysyl(4)-[histone H3] + S-adenosyl-L-homocysteine + H(+). The catalysed reaction is N(6),N(6)-dimethyl-L-lysyl(4)-[histone H3] + S-adenosyl-L-methionine = N(6),N(6),N(6)-trimethyl-L-lysyl(4)-[histone H3] + S-adenosyl-L-homocysteine + H(+). Catalytic component of the COMPASS (Set1C) complex that specifically mono-, di- and trimethylates histone H3 to form H3K4me1/2/3. Binds RNAs which might negatively affect its histone methyltransferase activity. COMPASS recognizes ubiquitinated H2B on one face of the nucleosome which stimulates the methylation of H3 on the opposing face. This is Histone-lysine N-methyltransferase, H3 lysine-4 specific (set-1) from Neurospora crassa (strain ATCC 24698 / 74-OR23-1A / CBS 708.71 / DSM 1257 / FGSC 987).